Here is a 398-residue protein sequence, read N- to C-terminus: Tear acid lipase-like protein (398 aa).

The N-terminal stretch at 1–19 (MSWLLSTMCLVHVCGNIFC) is a signal peptide. The active-site Nucleophile is the serine 170. An intrachain disulfide couples cysteine 243 to cysteine 252. Asparagine 268 carries an N-linked (GlcNAc...) asparagine glycan. Catalysis depends on charge relay system residues aspartate 340 and histidine 369.

It belongs to the AB hydrolase superfamily. Lipase family. In terms of assembly, monomer. In terms of processing, N-glycosylated. Expressed in female lacrimal gland acinar cells from where it is secreted into tears (at protein level).

The protein resides in the secreted. In terms of biological role, female-specific protein which lacks detectable lipase activity against a range of substrates. Binds the hydrophobic lipid 1-aminoanthracene with high affinity. The polypeptide is Tear acid lipase-like protein (Mesocricetus auratus (Golden hamster)).